The chain runs to 490 residues: Subtilisin-like protease 8 (490 aa).

The first 26 residues, 1–26 (MKGLLSLSVLPVLAYASPMIVDSIHQ), serve as a signal peptide directing secretion. Positions 27-134 (NAAPILSSTN…YIERDSEVHT (108 aa)) are excised as a propeptide. Positions 43–134 (SYIVVFKKGV…YIERDSEVHT (92 aa)) constitute an Inhibitor I9 domain. In terms of domain architecture, Peptidase S8 spans 144 to 450 (PWGLARISHR…GGSDDYKKII (307 aa)). Active-site charge relay system residues include D180 and H212. The N-linked (GlcNAc...) asparagine glycan is linked to N282. S378 (charge relay system) is an active-site residue. N456 carries an N-linked (GlcNAc...) asparagine glycan.

It belongs to the peptidase S8 family.

The protein localises to the secreted. Its function is as follows. Secreted subtilisin-like serine protease with keratinolytic activity that contributes to pathogenicity. This is Subtilisin-like protease 8 (SUB8) from Trichophyton verrucosum (strain HKI 0517).